The sequence spans 131 residues: D-ribose pyranase (131 aa).

The Proton donor role is filled by histidine 20. Residues aspartate 28, histidine 98, and 120–122 (FSN) each bind substrate.

The protein belongs to the RbsD / FucU family. RbsD subfamily. As to quaternary structure, homodecamer.

The protein localises to the cytoplasm. It carries out the reaction beta-D-ribopyranose = beta-D-ribofuranose. It participates in carbohydrate metabolism; D-ribose degradation; D-ribose 5-phosphate from beta-D-ribopyranose: step 1/2. Catalyzes the interconversion of beta-pyran and beta-furan forms of D-ribose. The chain is D-ribose pyranase from Oenococcus oeni (strain ATCC BAA-331 / PSU-1).